A 295-amino-acid chain; its full sequence is Protoheme IX farnesyltransferase 2 (295 aa).

9 helical membrane passes run 9–29, 36–56, 83–103, 108–128, 135–155, 163–183, 209–229, 230–250, and 264–284; these read ITKP…FFLA, FALF…GCVF, LTLA…LLYV, LAAF…SLWL, GTLV…CAVS, VTLL…IAIF, IVLY…GGYA, GLGY…MAWG, and VFGF…VDSQ.

Belongs to the UbiA prenyltransferase family. Protoheme IX farnesyltransferase subfamily.

It localises to the cell inner membrane. It carries out the reaction heme b + (2E,6E)-farnesyl diphosphate + H2O = Fe(II)-heme o + diphosphate. The protein operates within porphyrin-containing compound metabolism; heme O biosynthesis; heme O from protoheme: step 1/1. Its function is as follows. Converts heme B (protoheme IX) to heme O by substitution of the vinyl group on carbon 2 of heme B porphyrin ring with a hydroxyethyl farnesyl side group. The chain is Protoheme IX farnesyltransferase 2 from Pseudomonas entomophila (strain L48).